Consider the following 294-residue polypeptide: Putative deoxyribonuclease TATDN3 (294 aa).

Zn(2+) is bound by residues His9, His11, Glu104, His144, His167, and Asp215.

This sequence belongs to the metallo-dependent hydrolases superfamily. TatD-type hydrolase family. Requires Mn(2+) as cofactor. Ca(2+) is required as a cofactor. Mg(2+) serves as cofactor. The cofactor is Zn(2+).

The protein localises to the nucleus. The 3'-exonuclease activity is sensitive to the metal ion present in the active site, whereas the AP endodeoxyribonuclease activity is observed in a variety of divalent metal cofactors. 3'-exoxonuclease activity is suppressed in the presence of Ca(2+), Zn(2+) and Ni(2+). In terms of biological role, exhibits 3'-exonuclease activities and apurinic/apyrimidinic (AP) endonuclease (in vitro). Show preferential AP endonuclease activity on double-stranded DNA substrates and 3'- exonuclease activity on single-stranded DNA. This is Putative deoxyribonuclease TATDN3 (Tatdn3) from Mus musculus (Mouse).